Reading from the N-terminus, the 474-residue chain is Glutamate--tRNA ligase 2 (474 aa).

Positions 16-26 match the 'HIGH' region motif; that stretch reads PSPTGFLHIGG. Positions 245–249 match the 'KMSKS' region motif; that stretch reads KLSKR. Lysine 248 provides a ligand contact to ATP.

It belongs to the class-I aminoacyl-tRNA synthetase family. Glutamate--tRNA ligase type 1 subfamily. As to quaternary structure, monomer.

The protein localises to the cytoplasm. It carries out the reaction tRNA(Glu) + L-glutamate + ATP = L-glutamyl-tRNA(Glu) + AMP + diphosphate. Catalyzes the attachment of glutamate to tRNA(Glu) in a two-step reaction: glutamate is first activated by ATP to form Glu-AMP and then transferred to the acceptor end of tRNA(Glu). The sequence is that of Glutamate--tRNA ligase 2 from Rhizorhabdus wittichii (strain DSM 6014 / CCUG 31198 / JCM 15750 / NBRC 105917 / EY 4224 / RW1) (Sphingomonas wittichii).